Consider the following 178-residue polypeptide: Ribosome maturation factor RimP (178 aa).

The protein belongs to the RimP family.

The protein resides in the cytoplasm. In terms of biological role, required for maturation of 30S ribosomal subunits. The sequence is that of Ribosome maturation factor RimP from Streptococcus pyogenes serotype M18 (strain MGAS8232).